The sequence spans 231 residues: Ribose-5-phosphate isomerase A (231 aa).

Substrate is bound by residues 32 to 35, 85 to 88, and 98 to 101; these read TGST, DGAD, and KGGG. Catalysis depends on glutamate 107, which acts as the Proton acceptor. Residue lysine 125 participates in substrate binding.

This sequence belongs to the ribose 5-phosphate isomerase family. In terms of assembly, homodimer.

It carries out the reaction aldehydo-D-ribose 5-phosphate = D-ribulose 5-phosphate. Its pathway is carbohydrate degradation; pentose phosphate pathway; D-ribose 5-phosphate from D-ribulose 5-phosphate (non-oxidative stage): step 1/1. Functionally, catalyzes the reversible conversion of ribose-5-phosphate to ribulose 5-phosphate. The protein is Ribose-5-phosphate isomerase A of Burkholderia cenocepacia (strain ATCC BAA-245 / DSM 16553 / LMG 16656 / NCTC 13227 / J2315 / CF5610) (Burkholderia cepacia (strain J2315)).